The following is a 378-amino-acid chain: MSILKEAYLYFANGLFFKAQSFGSDGTFVGEVVFNTSMSGYQEVITDPSYSGQFIVFSMPEIGIVGVNNQDSESPRAACTGVILSSYNDFVSNFRSEQSLSTYLKEHNIMGICGVDTRNLIKMLTTQGAMMMIASTQITQESELKASLSRTPPIQDINFIKEVSTKTSYVHTDSTFDFTHFAYGTSPNFKAKVVAIDFGAKRNILNELVAVGLEVEVIPHSFSAAEILSRFKAGEIQGVFLSNGPGDPLVLHNEIEQIKQLIQSDIPIFGICLGHQLLSIAHGFPTYKLKFGHHGSNHPIKNLQSGAVEITAQNHNYCVPESIAQIATITHRNLFDNTIEGVRYKDKPIFSVQHHPEASPGPREARILFEEFAKLCCK.

Positions 1 to 188 (MSILKEAYLY…THFAYGTSPN (188 aa)) are CPSase. L-glutamine contacts are provided by Ser-49, Gly-244, and Gly-246. In terms of domain architecture, Glutamine amidotransferase type-1 spans 192–378 (KVVAIDFGAK…FEEFAKLCCK (187 aa)). Catalysis depends on Cys-272, which acts as the Nucleophile. L-glutamine-binding residues include Leu-273, Gln-276, Asn-314, and Tyr-317. Active-site residues include His-355 and Glu-357.

This sequence belongs to the CarA family. As to quaternary structure, composed of two chains; the small (or glutamine) chain promotes the hydrolysis of glutamine to ammonia, which is used by the large (or ammonia) chain to synthesize carbamoyl phosphate. Tetramer of heterodimers (alpha,beta)4.

It catalyses the reaction hydrogencarbonate + L-glutamine + 2 ATP + H2O = carbamoyl phosphate + L-glutamate + 2 ADP + phosphate + 2 H(+). The enzyme catalyses L-glutamine + H2O = L-glutamate + NH4(+). It participates in amino-acid biosynthesis; L-arginine biosynthesis; carbamoyl phosphate from bicarbonate: step 1/1. It functions in the pathway pyrimidine metabolism; UMP biosynthesis via de novo pathway; (S)-dihydroorotate from bicarbonate: step 1/3. Functionally, small subunit of the glutamine-dependent carbamoyl phosphate synthetase (CPSase). CPSase catalyzes the formation of carbamoyl phosphate from the ammonia moiety of glutamine, carbonate, and phosphate donated by ATP, constituting the first step of 2 biosynthetic pathways, one leading to arginine and/or urea and the other to pyrimidine nucleotides. The small subunit (glutamine amidotransferase) binds and cleaves glutamine to supply the large subunit with the substrate ammonia. The chain is Carbamoyl phosphate synthase small chain from Helicobacter hepaticus (strain ATCC 51449 / 3B1).